The chain runs to 131 residues: Small ribosomal subunit protein uS8 (131 aa).

Belongs to the universal ribosomal protein uS8 family. Part of the 30S ribosomal subunit. Contacts proteins S5 and S12.

One of the primary rRNA binding proteins, it binds directly to 16S rRNA central domain where it helps coordinate assembly of the platform of the 30S subunit. This Phocaeicola vulgatus (strain ATCC 8482 / DSM 1447 / JCM 5826 / CCUG 4940 / NBRC 14291 / NCTC 11154) (Bacteroides vulgatus) protein is Small ribosomal subunit protein uS8.